Reading from the N-terminus, the 816-residue chain is Leucine--tRNA ligase (816 aa).

The short motif at 40–51 (SYPSGAQLHAGH) is the 'HIGH' region element. Positions 576 to 580 (KMSKS) match the 'KMSKS' region motif. Lys579 contributes to the ATP binding site.

The protein belongs to the class-I aminoacyl-tRNA synthetase family.

It localises to the cytoplasm. The enzyme catalyses tRNA(Leu) + L-leucine + ATP = L-leucyl-tRNA(Leu) + AMP + diphosphate. The chain is Leucine--tRNA ligase from Clostridium beijerinckii (strain ATCC 51743 / NCIMB 8052) (Clostridium acetobutylicum).